A 461-amino-acid chain; its full sequence is Serine--tRNA ligase (461 aa).

Residues 112-134 (EVPFGRDENDNREHHTFGEKPRF) form a disordered region. A compositionally biased stretch (basic and acidic residues) spans 114–134 (PFGRDENDNREHHTFGEKPRF). 252 to 254 (TAE) lines the L-serine pocket. 283-285 (RAE) contributes to the ATP binding site. Position 306 (Glu-306) interacts with L-serine. 370-373 (EISS) provides a ligand contact to ATP. Residue Ser-406 participates in L-serine binding.

This sequence belongs to the class-II aminoacyl-tRNA synthetase family. Type-1 seryl-tRNA synthetase subfamily. Homodimer. The tRNA molecule binds across the dimer.

Its subcellular location is the cytoplasm. It catalyses the reaction tRNA(Ser) + L-serine + ATP = L-seryl-tRNA(Ser) + AMP + diphosphate + H(+). It carries out the reaction tRNA(Sec) + L-serine + ATP = L-seryl-tRNA(Sec) + AMP + diphosphate + H(+). The protein operates within aminoacyl-tRNA biosynthesis; selenocysteinyl-tRNA(Sec) biosynthesis; L-seryl-tRNA(Sec) from L-serine and tRNA(Sec): step 1/1. Functionally, catalyzes the attachment of serine to tRNA(Ser). Is also able to aminoacylate tRNA(Sec) with serine, to form the misacylated tRNA L-seryl-tRNA(Sec), which will be further converted into selenocysteinyl-tRNA(Sec). In Methylocella silvestris (strain DSM 15510 / CIP 108128 / LMG 27833 / NCIMB 13906 / BL2), this protein is Serine--tRNA ligase.